A 429-amino-acid polypeptide reads, in one-letter code: Septin-8 (429 aa).

Over residues 1–16 (MAATDLERVSNAEPEP) the composition is skewed to basic and acidic residues. The interval 1–23 (MAATDLERVSNAEPEPRSLSLGG) is disordered. Position 2 is an N-acetylalanine (alanine 2). Residue serine 10 is modified to Phosphoserine. Residues 41–307 (QGFSFNILCV…ELYRRCKLEE (267 aa)) form the Septin-type G domain. Positions 51-58 (GETGIGKS) are G1 motif. GTP-binding positions include 51–58 (GETGIGKS), glycine 106, 187–195 (KADTISKSE), glycine 241, and arginine 256. The segment at 103-106 (DAVG) is G3 motif. A G4 motif region spans residues 186–189 (AKAD). A coiled-coil region spans residues 320–412 (FSLQETYEAK…AAMEALQSQA (93 aa)). Over residues 409–420 (QSQALHATSQQP) the composition is skewed to polar residues. The disordered stretch occupies residues 409 to 429 (QSQALHATSQQPLRKDKDKKN).

Belongs to the TRAFAC class TrmE-Era-EngA-EngB-Septin-like GTPase superfamily. Septin GTPase family. Septins polymerize into heterooligomeric protein complexes that form filaments, and can associate with cellular membranes, actin filaments and microtubules. GTPase activity is required for filament formation. Interacts with SEPTIN5. Interacts with CDK14, SEPTIN4 and SEPTIN7. Interacts with VAMP2; the interaction inhibits interaction of VAMP2 with SYP. Interacts with STX1A.

The protein resides in the cytoplasm. It localises to the cytoskeleton. It is found in the synapse. The protein localises to the cell projection. Its subcellular location is the axon. The protein resides in the cytoplasmic vesicle. It localises to the secretory vesicle. It is found in the synaptic vesicle membrane. The protein localises to the presynapse. Filament-forming cytoskeletal GTPase. May play a role in platelet secretion. Seems to participate in the process of SNARE complex formation in synaptic vesicles. The polypeptide is Septin-8 (Mus musculus (Mouse)).